Reading from the N-terminus, the 83-residue chain is Large ribosomal subunit protein bL31B (83 aa).

It belongs to the bacterial ribosomal protein bL31 family. Type B subfamily. In terms of assembly, part of the 50S ribosomal subunit.

Its function is as follows. Binds the 23S rRNA. This is Large ribosomal subunit protein bL31B from Hydrogenovibrio crunogenus (strain DSM 25203 / XCL-2) (Thiomicrospira crunogena).